Consider the following 99-residue polypeptide: Protein translation factor SUI1 homolog (99 aa).

The protein belongs to the SUI1 family.

The protein is Protein translation factor SUI1 homolog of Pyrococcus horikoshii (strain ATCC 700860 / DSM 12428 / JCM 9974 / NBRC 100139 / OT-3).